The sequence spans 2151 residues: Calpain-type cysteine protease DEK1 (2151 aa).

The first 32 residues, 1–32 (MEGDERGVLLACVISGTLFTVFGSGSFWILWA), serve as a signal peptide directing secretion. Topologically, residues 33 to 69 (VNWRPWRLYSWIFARKWPKVLQGPQLDILCGVLSLFA) are extracellular. A helical membrane pass occupies residues 70 to 90 (WIVVVSPIAILIGWGSWLIVI). The Cytoplasmic segment spans residues 91–94 (LDRH). Residues 95–115 (IIGLAIIMAGTALLLAFYSIM) traverse the membrane as a helical segment. Residues 116-126 (LWWRTQWQSSR) lie on the Extracellular side of the membrane. A helical membrane pass occupies residues 127–147 (AVALLLLLGVALLCAYELCAV). The Cytoplasmic segment spans residues 148 to 163 (YVTAGAHASQQYSPSG). The chain crosses the membrane as a helical span at residues 164–184 (FFFGVSAIALAINMLFICRMV). The Extracellular portion of the chain corresponds to 185 to 235 (FNGNGLDVDEYVRRAYKFAYSDCIEVGPVACLPEPPDPNELYPRQTSRASH). Residues 236–256 (LGLLYLGSLVVLLAYSVLYGL) form a helical membrane-spanning segment. Over 257-263 (TARESRW) the chain is Cytoplasmic. Residues 264 to 284 (LGGITSAAVIVLDWNIGACLY) traverse the membrane as a helical segment. At 285-293 (GFKLLQNRV) the chain is on the extracellular side. The helical transmembrane segment at 294–314 (LALFVAGISRLFLICFGIHYW) threads the bilayer. Residues 315-319 (YLGHC) are Cytoplasmic-facing. A helical membrane pass occupies residues 320 to 340 (ISYIFVASVLSGAAVSRHLSI). The Extracellular portion of the chain corresponds to 341–615 (TDPSAARRDA…LLLHHVAGTP (275 aa)). Disordered regions lie at residues 363–393 (RRKEQNSSSSSSDGCGSSIKRSSSIDAGHTG) and 405–442 (CTADNLTRTGSSQEGINSDKSEESGRPSLGLRSSSCRS). Low complexity predominate over residues 369 to 388 (SSSSSSDGCGSSIKRSSSID). Residues 405–420 (CTADNLTRTGSSQEGI) are compositionally biased toward polar residues. Residues 430-442 (RPSLGLRSSSCRS) show a composition bias toward low complexity. Residues 616-636 (ERAWGLFSLVFILETIIVAIF) traverse the membrane as a helical segment. Residues 637–652 (RPKTITIINSSHQQFE) lie on the Cytoplasmic side of the membrane. Residues 653-673 (FGFSVLLLSPVVCSIMAFLRS) form a helical membrane-spanning segment. Residues 674–686 (LQVEEMALTSKSR) are Extracellular-facing. The helical transmembrane segment at 687–707 (KYGFVAWLLSTSVGLSLSFLS) threads the bilayer. The Cytoplasmic portion of the chain corresponds to 708–711 (KSSV). Residues 712 to 732 (LLGISLTVPLMAACLSIAVPI) form a helical membrane-spanning segment. Topologically, residues 733–760 (WMHNGYQFWVPQLSCGDQARDLRSPRIK) are extracellular. A helical membrane pass occupies residues 761 to 782 (GFILWICVVLFAGSVISLGAII). The Cytoplasmic portion of the chain corresponds to 783–813 (SAKPLDDLKYKLFSARENNVTSPYTSSVYLG). The chain crosses the membrane as a helical span at residues 814–834 (WAMSSGIALVVTAILPIVSWF). Residues 835-844 (ATYRFSHSSA) are Extracellular-facing. The chain crosses the membrane as a helical span at residues 845–865 (VCLMIFSVVLVAFCGTSYLEV). Residues 866–878 (VKSRDDQLPTKGD) lie on the Cytoplasmic side of the membrane. A helical membrane pass occupies residues 879–899 (FLAALLPLACIPALLSLCCGM). At 900–912 (VKWKDDCWILSRG) the chain is on the extracellular side. Residues 913 to 933 (VYVFFSIGLLLLFGAIAAVIA) traverse the membrane as a helical segment. At 934-936 (VKP) the chain is on the cytoplasmic side. A helical transmembrane segment spans residues 937 to 957 (WTIGVSFLLVLFLMVVTIGVI). At 958-971 (HLWASNNFYLTRKQ) the chain is on the extracellular side. A helical transmembrane segment spans residues 972–992 (TSFVCFLALLLGLAAFLLGWH). The Cytoplasmic segment spans residues 993–1006 (QDKAFAGASVGYFT). A helical transmembrane segment spans residues 1007-1027 (FLSLLAGRALAVLLSPPIVVY). Residues 1028–1050 (SPRVLPVYVYDAHADCGKNVSAA) lie on the Extracellular side of the membrane. The helical transmembrane segment at 1051-1071 (FLVLYGIALATEGWGVVASLI) threads the bilayer. At 1072–2151 (IYPPFAGAAV…TKASIVLEAL (1080 aa)) the chain is on the cytoplasmic side. Calpain catalytic domains lie at 1407-1600 (SGKH…DMID) and 1695-1997 (QFTD…CRVY). Residues C1761, H1919, and N1939 contribute to the active site.

The protein belongs to the peptidase C2 family. Autocatalytic proteolytic cleavage leading to the production of mainly cytoplasmic localized subproducts of about 85 and 120 kDa. Mostly expressed in meristems and organ primordia. Expressed at low levels in young and germinating seeds at 10 ppm and in seedling roots at 67 ppm. Present in most tissues at a low level.

Its subcellular location is the cell membrane. The protein resides in the endosome membrane. It is found in the endoplasmic reticulum membrane. It localises to the cytoplasm. Essential protease involved in epiderm development. Required for aleurone cell development in the endosperm probably by maintaining and restricting the aleurone and embryonic epidermal L1 cell-layer fates as well as meristems organization. Involved in the maintenance of adaxial/abaxial axis information in developing leaves, probably by regulating cell proliferation and expansion. Does not need calcium ions to be active. Required for the formation of giant cells in sepals by determining cell fate and promoting endoreplication. This is Calpain-type cysteine protease DEK1 from Arabidopsis thaliana (Mouse-ear cress).